The primary structure comprises 257 residues: Phosphonates import ATP-binding protein PhnC 1 (257 aa).

In terms of domain architecture, ABC transporter spans 2-246; sequence LKITNLTKRY…EMDTIYAGVP (245 aa). 35 to 42 is a binding site for ATP; sequence GSSGAGKS.

Belongs to the ABC transporter superfamily. Phosphonates importer (TC 3.A.1.9.1) family. The complex is composed of two ATP-binding proteins (PhnC), two transmembrane proteins (PhnE) and a solute-binding protein (PhnD).

It is found in the cell inner membrane. It carries out the reaction phosphonate(out) + ATP + H2O = phosphonate(in) + ADP + phosphate + H(+). In terms of biological role, part of the ABC transporter complex PhnCDE involved in phosphonates import. Responsible for energy coupling to the transport system. The chain is Phosphonates import ATP-binding protein PhnC 1 from Ruegeria sp. (strain TM1040) (Silicibacter sp.).